Consider the following 340-residue polypeptide: Ketol-acid reductoisomerase (NADP(+)) (340 aa).

One can recognise a KARI N-terminal Rossmann domain in the interval 2 to 181; that stretch reads VKMYYEADVK…GCTKAGVIET (180 aa). NADP(+) contacts are provided by residues 25–28, Arg-48, Ser-52, and 82–85; these read YGSQ and DERQ. His-107 is a catalytic residue. Gly-133 is a binding site for NADP(+). Residues 182 to 327 enclose the KARI C-terminal knotted domain; that stretch reads SFREETETDL…EQLRGMMSWI (146 aa). Mg(2+) is bound by residues Asp-190, Glu-194, Glu-226, and Glu-230. Ser-251 is a binding site for substrate.

Belongs to the ketol-acid reductoisomerase family. It depends on Mg(2+) as a cofactor.

It catalyses the reaction (2R)-2,3-dihydroxy-3-methylbutanoate + NADP(+) = (2S)-2-acetolactate + NADPH + H(+). It carries out the reaction (2R,3R)-2,3-dihydroxy-3-methylpentanoate + NADP(+) = (S)-2-ethyl-2-hydroxy-3-oxobutanoate + NADPH + H(+). The protein operates within amino-acid biosynthesis; L-isoleucine biosynthesis; L-isoleucine from 2-oxobutanoate: step 2/4. It participates in amino-acid biosynthesis; L-valine biosynthesis; L-valine from pyruvate: step 2/4. Involved in the biosynthesis of branched-chain amino acids (BCAA). Catalyzes an alkyl-migration followed by a ketol-acid reduction of (S)-2-acetolactate (S2AL) to yield (R)-2,3-dihydroxy-isovalerate. In the isomerase reaction, S2AL is rearranged via a Mg-dependent methyl migration to produce 3-hydroxy-3-methyl-2-ketobutyrate (HMKB). In the reductase reaction, this 2-ketoacid undergoes a metal-dependent reduction by NADPH to yield (R)-2,3-dihydroxy-isovalerate. The polypeptide is Ketol-acid reductoisomerase (NADP(+)) (Brevibacillus brevis (strain 47 / JCM 6285 / NBRC 100599)).